A 106-amino-acid chain; its full sequence is Putative cytochrome c oxidase subunit 7A3, mitochondrial (106 aa).

The transit peptide at 1 to 23 (MLWNLLALHQIGQRTISTASHRH) directs the protein to the mitochondrion.

This sequence belongs to the cytochrome c oxidase VIIa family.

It is found in the mitochondrion inner membrane. This is Putative cytochrome c oxidase subunit 7A3, mitochondrial (COX7A2P2) from Homo sapiens (Human).